Consider the following 320-residue polypeptide: HPr kinase/phosphorylase (320 aa).

Catalysis depends on residues His-141 and Lys-162. Residue Gly-156–Ser-163 participates in ATP binding. A Mg(2+)-binding site is contributed by Ser-163. Asp-180 functions as the Proton acceptor; for phosphorylation activity. Proton donor; for dephosphorylation activity in the catalytic mechanism. The segment at Leu-204–Asn-213 is important for the catalytic mechanism of both phosphorylation and dephosphorylation. A Mg(2+)-binding site is contributed by Glu-205. Arg-248 is a catalytic residue. Residues Pro-269 to Arg-274 are important for the catalytic mechanism of dephosphorylation.

This sequence belongs to the HPrK/P family. Homohexamer. Requires Mg(2+) as cofactor.

It catalyses the reaction [HPr protein]-L-serine + ATP = [HPr protein]-O-phospho-L-serine + ADP + H(+). The enzyme catalyses [HPr protein]-O-phospho-L-serine + phosphate + H(+) = [HPr protein]-L-serine + diphosphate. Functionally, catalyzes the ATP- as well as the pyrophosphate-dependent phosphorylation of a specific serine residue in HPr, a phosphocarrier protein of the phosphoenolpyruvate-dependent sugar phosphotransferase system (PTS). HprK/P also catalyzes the pyrophosphate-producing, inorganic phosphate-dependent dephosphorylation (phosphorolysis) of seryl-phosphorylated HPr (P-Ser-HPr). The sequence is that of HPr kinase/phosphorylase from Neisseria meningitidis serogroup C / serotype 2a (strain ATCC 700532 / DSM 15464 / FAM18).